The following is a 285-amino-acid chain: Pantothenate synthetase (285 aa).

An ATP-binding site is contributed by 30-37 (MGFLHEGH). Catalysis depends on His37, which acts as the Proton donor. Gln61 is a binding site for (R)-pantoate. Residue Gln61 participates in beta-alanine binding. Residue 147–150 (GQKD) coordinates ATP. Gln153 is a (R)-pantoate binding site. ATP-binding positions include Val176 and 184–187 (KSSR).

This sequence belongs to the pantothenate synthetase family. Homodimer.

Its subcellular location is the cytoplasm. It carries out the reaction (R)-pantoate + beta-alanine + ATP = (R)-pantothenate + AMP + diphosphate + H(+). Its pathway is cofactor biosynthesis; (R)-pantothenate biosynthesis; (R)-pantothenate from (R)-pantoate and beta-alanine: step 1/1. Functionally, catalyzes the condensation of pantoate with beta-alanine in an ATP-dependent reaction via a pantoyl-adenylate intermediate. This Listeria monocytogenes serovar 1/2a (strain ATCC BAA-679 / EGD-e) protein is Pantothenate synthetase.